Here is a 400-residue protein sequence, read N- to C-terminus: MEFGDLRIDESLIKTCQEKGITRPTEVQRQVIPAVLGGGDVIAVSQTGSGKTLAFVLPIVSHLLQKNRSFYCLVVAPTRELSSQIAECFNMFQATGLRVCLLVGGANFNVQANQLSKRPHVVVGTPGRIAEHVLKTKSFRTERVRKFVLDEADRFFEQDFVEDLETIIPSLREKRQTLLFTATMSDEISKLSSSILKRPKTIRTAEKYETVPALKEYYLFVAMKWKNSALVELLEMSQGMSVIVFVSMCVTARVMSLALARLGFCSEALHGELSQEKREEAMRSFKESRFNVLVCTDLGSRGLDISHVDLVINFDVPKSGKDYIHRVGRTARAGRSGTAITLVTQYDVEQIQKIEFTLEKKLEEFKMMKKNFGTICARIEEAIQEAQETLKEERKRNRRP.

The Q motif motif lies at 1–29 (MEFGDLRIDESLIKTCQEKGITRPTEVQR). One can recognise a Helicase ATP-binding domain in the interval 32–202 (IPAVLGGGDV…SSILKRPKTI (171 aa)). 45 to 52 (SQTGSGKT) lines the ATP pocket. A DEAD box motif is present at residues 150 to 153 (DEAD). One can recognise a Helicase C-terminal domain in the interval 229-373 (ALVELLEMSQ…EFKMMKKNFG (145 aa)).

It belongs to the DEAD box helicase family. DDX47/RRP3 subfamily. Interacts with the SSU processome.

Its subcellular location is the nucleus. The enzyme catalyses ATP + H2O = ADP + phosphate + H(+). In terms of biological role, ATP-dependent rRNA helicase required for pre-ribosomal RNA processing. Involved in the maturation of the 35S-pre-rRNA and to its cleavage to mature 18S rRNA. This Encephalitozoon cuniculi (strain GB-M1) (Microsporidian parasite) protein is ATP-dependent rRNA helicase RRP3.